The sequence spans 169 residues: Peptide methionine sulfoxide reductase MsrA (169 aa).

The active site involves C11.

It belongs to the MsrA Met sulfoxide reductase family.

The catalysed reaction is L-methionyl-[protein] + [thioredoxin]-disulfide + H2O = L-methionyl-(S)-S-oxide-[protein] + [thioredoxin]-dithiol. It carries out the reaction [thioredoxin]-disulfide + L-methionine + H2O = L-methionine (S)-S-oxide + [thioredoxin]-dithiol. In terms of biological role, has an important function as a repair enzyme for proteins that have been inactivated by oxidation. Catalyzes the reversible oxidation-reduction of methionine sulfoxide in proteins to methionine. This Leifsonia xyli subsp. xyli (strain CTCB07) protein is Peptide methionine sulfoxide reductase MsrA.